The primary structure comprises 145 residues: 3-hydroxyacyl-[acyl-carrier-protein] dehydratase FabZ (145 aa).

H47 is a catalytic residue.

It belongs to the thioester dehydratase family. FabZ subfamily.

The protein resides in the cytoplasm. It catalyses the reaction a (3R)-hydroxyacyl-[ACP] = a (2E)-enoyl-[ACP] + H2O. In terms of biological role, involved in unsaturated fatty acids biosynthesis. Catalyzes the dehydration of short chain beta-hydroxyacyl-ACPs and long chain saturated and unsaturated beta-hydroxyacyl-ACPs. The sequence is that of 3-hydroxyacyl-[acyl-carrier-protein] dehydratase FabZ from Acidovorax sp. (strain JS42).